A 451-amino-acid polypeptide reads, in one-letter code: Glucose-6-phosphate isomerase (451 aa).

The active-site Proton donor is the glutamate 291. Residues histidine 312 and lysine 426 contribute to the active site.

It belongs to the GPI family.

It is found in the cytoplasm. It carries out the reaction alpha-D-glucose 6-phosphate = beta-D-fructose 6-phosphate. Its pathway is carbohydrate biosynthesis; gluconeogenesis. It functions in the pathway carbohydrate degradation; glycolysis; D-glyceraldehyde 3-phosphate and glycerone phosphate from D-glucose: step 2/4. Catalyzes the reversible isomerization of glucose-6-phosphate to fructose-6-phosphate. The sequence is that of Glucose-6-phosphate isomerase from Caldanaerobacter subterraneus subsp. tengcongensis (strain DSM 15242 / JCM 11007 / NBRC 100824 / MB4) (Thermoanaerobacter tengcongensis).